The primary structure comprises 306 residues: MAVTWEEYFRLVFSEKVQPKPLEQTGDDSSVLQLILEKKEELAVADLGLQAQKKEYRSTIESVNQRWRELEQKGQELQGSVISYDKFLKEVEARRAARKAIEERKITGNLDAELRRLRTQLKELRLQRARLQRKVQRLEPCARILKRALEKRPVFEEVSDLVARFETLVSTKAALKLEEQKRLVEMESTRAQLLSLQSEKQDEMLNLNQQRTQLVEQLEAAREHRQQWESKWTEILNSASEKTLLLGRARMAVLNLYHLVRLQQGRRQTLDVRDVEGQLEEVKRFIMNISATLAKLALAQPTATAS.

Coiled coils occupy residues 49–139 (LQAQ…QRLE) and 197–231 (QSEKQDEMLNLNQQRTQLVEQLEAAREHRQQWESK).

This sequence belongs to the CFAP73 family.

It localises to the cytoplasm. The protein resides in the cytoskeleton. The protein localises to the cilium axoneme. In terms of biological role, may play a role in ciliary/flagellar motility by regulating the assembly and the activity of axonemal inner dynein arm. This chain is Cilia- and flagella-associated protein 73, found in Mus musculus (Mouse).